Reading from the N-terminus, the 921-residue chain is Protein translocase subunit SecA (921 aa).

Residues Gln87, 105–109 (GEGKT), and Asp501 contribute to the ATP site. The segment at 831-886 (PFPVINTETSGPSEEPAGLFSQGTTGGDIPAPQPMAGFPSAAPMPPRPQPVPTGAE) is disordered. Pro residues predominate over residues 872–881 (APMPPRPQPV). Residues Cys905, Cys907, Cys916, and His917 each coordinate Zn(2+).

This sequence belongs to the SecA family. In terms of assembly, monomer and homodimer. Part of the essential Sec protein translocation apparatus which comprises SecA, SecYEG and auxiliary proteins SecDF-YajC and YidC. Requires Zn(2+) as cofactor.

Its subcellular location is the cell inner membrane. It localises to the cytoplasm. It catalyses the reaction ATP + H2O + cellular proteinSide 1 = ADP + phosphate + cellular proteinSide 2.. In terms of biological role, part of the Sec protein translocase complex. Interacts with the SecYEG preprotein conducting channel. Has a central role in coupling the hydrolysis of ATP to the transfer of proteins into and across the cell membrane, serving both as a receptor for the preprotein-SecB complex and as an ATP-driven molecular motor driving the stepwise translocation of polypeptide chains across the membrane. The sequence is that of Protein translocase subunit SecA from Gluconobacter oxydans (strain 621H) (Gluconobacter suboxydans).